Consider the following 106-residue polypeptide: Putative double-stranded DNA mimic protein VCM66_1163 (106 aa).

It belongs to the putative dsDNA mimic protein family.

May act as a double-stranded DNA (dsDNA) mimic. Probably regulates the activity of a dsDNA-binding protein. The chain is Putative double-stranded DNA mimic protein VCM66_1163 from Vibrio cholerae serotype O1 (strain M66-2).